Consider the following 416-residue polypeptide: Sarcosine oxidase subunit beta (416 aa).

Glycine 41, histidine 42, glutamate 63, asparagine 71, threonine 76, and isoleucine 78 together coordinate FAD. Position 182 is a tele-8alpha-FMN histidine (histidine 182). FAD-binding residues include valine 206, glycine 366, and lysine 368.

It belongs to the SoxB family. In terms of assembly, heterotetramer composed of subunits alpha (SoxA), beta (SoxB), gamma (SoxG) and delta (SoxD). FAD serves as cofactor. Requires FMN as cofactor.

The protein localises to the cytoplasm. The catalysed reaction is sarcosine + (6S)-5,6,7,8-tetrahydrofolate + O2 = (6R)-5,10-methylene-5,6,7,8-tetrahydrofolate + glycine + H2O2. It catalyses the reaction sarcosine + O2 + H2O = formaldehyde + glycine + H2O2. In terms of biological role, in the presence of tetrahydrofolate, catalyzes the oxidative demethylation of sarcosine to yield glycine, 5,10-methylenetetrahydrofolate and hydrogen peroxide. In the absence of tetrahydrofolate, catalyzes the oxidative demethylation of sarcosine to yield glycine, formaldehyde and hydrogen peroxide. This chain is Sarcosine oxidase subunit beta (soxB), found in Rhizobium meliloti (strain 1021) (Ensifer meliloti).